We begin with the raw amino-acid sequence, 74 residues long: MIKVEIGQCLIPELCRKKDITINELSEITGIKKQQLSDYNRLVKVDMSIRTAKRIAAALDCNVEDLYEFKVERH.

An HTH cro/C1-type domain is found at 11-66 (IPELCRKKDITINELSEITGIKKQQLSDYNRLVKVDMSIRTAKRIAAALDCNVEDL). Residues 22–41 (INELSEITGIKKQQLSDYNR) constitute a DNA-binding region (H-T-H motif).

This chain is SPbeta prophage-derived uncharacterized HTH-type transcriptional regulator YopS (yopS), found in Bacillus subtilis (strain 168).